The primary structure comprises 1950 residues: E3 ubiquitin-protein ligase UBR1 (1950 aa).

Residues His-118, Cys-123, Cys-136, Cys-139, Cys-148, Cys-151, His-157, His-160, His-161, Cys-175, Cys-177, and Cys-189 each contribute to the Zn(2+) site. The UBR-type zinc finger occupies 121 to 194 (RNCGRKFKIG…SPLHCKAEEQ (74 aa)). Phosphoserine is present on residues Ser-296 and Ser-300. Positions 678–681 (HVLH) are ubiquitin-binding loop. Zn(2+) is bound at residue Asp-952. The segment at 1165-1200 (KERKRRLAKKHQARLLAKFNNQQTKFMKEHESEFDE) is UBC2-binding region (U2BR). Zn(2+) is bound by residues Cys-1220, Cys-1223, Cys-1295, His-1297, His-1300, Cys-1303, Cys-1320, and Cys-1323. The RING-type; atypical zinc finger occupies 1220 to 1324 (CALCQDSSST…SNAFICPLCQ (105 aa)). Positions 1333–1665 (LCQTSKANTG…YEYCGIIKLI (333 aa)) are cap helical domain (CHD). 6 residues coordinate Zn(2+): Cys-1703, Cys-1706, His-1722, Cys-1727, His-1763, and Asp-1775. Disordered regions lie at residues 1826–1846 (RPRRIPPTDEDDEDMEEGEDG) and 1893–1950 (TLQP…REIW). Composition is skewed to acidic residues over residues 1833–1846 (TDEDDEDMEEGEDG) and 1934–1950 (DEDDSDDNDDSDEREIW). Ser-1938 carries the post-translational modification Phosphoserine.

This sequence belongs to the E3 ubiquitin-protein ligase UBR1-like family. Interacts with UBC2. Interacts with RPN2, RPT1 and RPT6 from the 26S proteasome.

The enzyme catalyses S-ubiquitinyl-[E2 ubiquitin-conjugating enzyme]-L-cysteine + [acceptor protein]-L-lysine = [E2 ubiquitin-conjugating enzyme]-L-cysteine + N(6)-ubiquitinyl-[acceptor protein]-L-lysine.. Its pathway is protein modification; protein ubiquitination. Functionally, ubiquitin ligase protein which is a component of the N-end rule pathway. Recognizes and binds to proteins bearing specific N-terminal residues that are destabilizing according to the N-end rule, leading to their ubiquitination and subsequent degradation. Recognizes both type-1 and type-2 N-degrons, containing positively charged amino acids (Arg, Lys and His) and bulky and hydrophobic amino acids, respectively. The protein is E3 ubiquitin-protein ligase UBR1 of Saccharomyces cerevisiae (strain ATCC 204508 / S288c) (Baker's yeast).